Consider the following 78-residue polypeptide: MNLCLSALLFFLVILLPSGKGMFGNDGVKVRTCTSQKAVCFFGCPPGYRWIAFCHNILSCCKNMTRFQPPQAKDPWVH.

Residues 1–21 (MNLCLSALLFFLVILLPSGKG) form the signal peptide. 3 cysteine pairs are disulfide-bonded: Cys33/Cys60, Cys40/Cys54, and Cys44/Cys61.

Belongs to the beta-defensin family.

It localises to the secreted. Its function is as follows. Host defense peptide that exhibits antibacterial and antifungal activity. Exhibits antimicrobial activity against E.coli, S.aureus and C.albicans (in vitro). Has high lipopolysaccharide (LPS)-binding affinity, and may thereby be involved in immunoregulation through LPS neutralization. In Homo sapiens (Human), this protein is Defensin beta 136 (DEFB136).